The following is a 157-amino-acid chain: 6,7-dimethyl-8-ribityllumazine synthase (157 aa).

5-amino-6-(D-ribitylamino)uracil-binding positions include phenylalanine 23, 57-59 (AFE), and 81-83 (AVI). Position 86-87 (86-87 (AT)) interacts with (2S)-2-hydroxy-3-oxobutyl phosphate. Catalysis depends on histidine 89, which acts as the Proton donor. Phenylalanine 114 serves as a coordination point for 5-amino-6-(D-ribitylamino)uracil. (2S)-2-hydroxy-3-oxobutyl phosphate is bound at residue arginine 128.

This sequence belongs to the DMRL synthase family.

It carries out the reaction (2S)-2-hydroxy-3-oxobutyl phosphate + 5-amino-6-(D-ribitylamino)uracil = 6,7-dimethyl-8-(1-D-ribityl)lumazine + phosphate + 2 H2O + H(+). It participates in cofactor biosynthesis; riboflavin biosynthesis; riboflavin from 2-hydroxy-3-oxobutyl phosphate and 5-amino-6-(D-ribitylamino)uracil: step 1/2. Catalyzes the formation of 6,7-dimethyl-8-ribityllumazine by condensation of 5-amino-6-(D-ribitylamino)uracil with 3,4-dihydroxy-2-butanone 4-phosphate. This is the penultimate step in the biosynthesis of riboflavin. The protein is 6,7-dimethyl-8-ribityllumazine synthase of Desulforapulum autotrophicum (strain ATCC 43914 / DSM 3382 / VKM B-1955 / HRM2) (Desulfobacterium autotrophicum).